The chain runs to 63 residues: Hyphancin-3E (63 aa).

Residues 1–22 form the signal peptide; that stretch reads MNFSRILFFVFTCFVALASVSG. A propeptide spans 23-26 (removed by a dipeptidylpeptidase); that stretch reads APEP. Position 61 is a leucine amide (leucine 61).

Belongs to the cecropin family.

It is found in the secreted. Functionally, has antibacterial activity. The polypeptide is Hyphancin-3E (Hyphantria cunea (Fall webworm moth)).